The chain runs to 248 residues: PF03932 family protein CutC (248 aa).

Belongs to the CutC family. Homodimer.

Its subcellular location is the cytoplasm. This is PF03932 family protein CutC from Shigella boydii serotype 4 (strain Sb227).